The primary structure comprises 675 residues: MADKEAGGGDAGPRETAPTSTYSSPARSLGDTGITPLSPSHILNDADPVSEQQTFLVVVAIDFGTTSSGYAYSFTKEPECIHVMRRWEGGDPGVSNQKTPTTILLTPERKFHSFGYAARDFYHDLDPSEAKQWLYLEKFKMKLHTTGDLTMDTDLTAANGKKVKALEIFAYALQYFKEQALKELSDQAGSDFENSDVRWVITVPAIWKQPAKQFMREAAYQAGLASPENSEQLIIALEPEAASIYCRKLRLHQMIELSSKAVVNGYSASDTVGAGFAQAKEHVRRNRQSRTFLVENVIGEIWSELEEGDKYVVVDSGGGTVDLTVHQIRLPEGHLKELYKATGGPYGSLGVDYEFEKLLCKIFGEDFIEQFKIKRPAAWVDLMIAFESRKRAAAPDRTNPLNITLPFSFIDYYKKFRGHSVEHALRKSNVDFVKWSSQGMLRMSPDAMNALFKPTIDSIIEHLRDLFQKPEVSTVKFLFLVGGFAEAPLLQQAVQTAFGDKCRIIIPQDVGLTILKGAVLFGLDPAVIKVRRSPLTYGVGVLNRYVEGKHPPEKLLVKDGTRWCTDVFDKFISADQSVALGELVKRSYTPAKPSQLVIIINIYSSEHDNVSFITDPGVKKCGTLRLDLTGSGGTAVPARREIQTIMQFGDTEIKATAVDITTSKSVKVGIDFLNY.

Residues 1–45 (MADKEAGGGDAGPRETAPTSTYSSPARSLGDTGITPLSPSHILND) form a disordered region. Alanine 2 carries the N-acetylalanine modification. The span at 17–26 (APTSTYSSPA) shows a compositional bias: polar residues.

This sequence belongs to the heat shock protein 70 family. In terms of assembly, interacts with SORL1 (via cytosolic C-terminus); this interaction affects SORL1 internalization and subcellular localization. As to expression, expressed most strongly in brain, kidney and heart with little or no expression in other tissues. In the brain, expressed in glial cells, including astrocytes (at protein level). In the aorta, preferentially expressed in lesions.

Its subcellular location is the cytoplasm. The protein resides in the nucleus. Functionally, adapter protein for SORL1, but not SORT1. Delays SORL1 internalization and affects SORL1 subcellular localization. This chain is Heat shock 70 kDa protein 12A (Hspa12a), found in Mus musculus (Mouse).